Consider the following 582-residue polypeptide: Peptidyl-prolyl cis-trans isomerase FKBP10 (582 aa).

A signal peptide spans M1–A26. PPIase FKBP-type domains lie at G62–W150, G174–H262, and G286–H374. 7 N-linked (GlcNAc...) asparagine glycosylation sites follow: N70, N182, N294, N310, N352, N393, and N407. Positions G399–E486 constitute a PPIase FKBP-type 4 domain. 2 EF-hand domains span residues W497 to E532 and D542 to R577. 10 residues coordinate Ca(2+): D510, N512, D514, E516, E521, D555, N557, D559, K561, and E566. Residues G533–L582 are disordered. Positions R556–L582 are enriched in basic and acidic residues. The Prevents secretion from ER motif lies at H579 to L582.

Glycosylated and phosphorylated.

Its subcellular location is the endoplasmic reticulum lumen. It carries out the reaction [protein]-peptidylproline (omega=180) = [protein]-peptidylproline (omega=0). Inhibited by both FK506 and rapamycin, but not by cyclosporin A. Its function is as follows. PPIases accelerate the folding of proteins during protein synthesis. The chain is Peptidyl-prolyl cis-trans isomerase FKBP10 (FKBP10) from Homo sapiens (Human).